The chain runs to 325 residues: MAQQIVLTNTVKDSQLGQRLDQAIAELFADFSRSRLKEWLLDGKVQVNGEVVTKPRTKVMGGEEITLQAELEDEERWEAQDIPLDIVYEDDDIIVINKPRDFVVHPGAGTPDGTVLNALLHHYPDIAEVPRAGIVHRLDKDTTGLMVVAKTVPAQTRLVRALQKRNITREYEAIAIGRMTAGGKVDQPIGRHSTKRTLMAVAPLGKPAVTHYRVAEHFREHTRIRLRLETGRTHQIRVHMSYLQHPLLGDTAYGGRARIPTGASQELTDMIRGFDRQALHAVMLRFEHPITGEELEFHAPVPDDMVAMTEALRKDTEEYGLPDEF.

The S4 RNA-binding domain maps to 18–91 (QRLDQAIAEL…IPLDIVYEDD (74 aa)). Residue aspartate 139 is part of the active site.

The protein belongs to the pseudouridine synthase RluA family.

It localises to the cytoplasm. It catalyses the reaction uridine(1911/1915/1917) in 23S rRNA = pseudouridine(1911/1915/1917) in 23S rRNA. Responsible for synthesis of pseudouridine from uracil at positions 1911, 1915 and 1917 in 23S ribosomal RNA. In Vibrio parahaemolyticus serotype O3:K6 (strain RIMD 2210633), this protein is Ribosomal large subunit pseudouridine synthase D (rluD).